A 2210-amino-acid polypeptide reads, in one-letter code: Genome polyprotein (2210 aa).

The tract at residues 1 to 22 is disordered; the sequence is MAPVVSRDRHRHKIPKPHQPAP. An SF3 helicase domain is found at 426 to 585; that stretch reads SSKIMELSTI…ADFLRQHPGV (160 aa). Residue 456-463 participates in ATP binding; sequence GPPGHGKS. Y940 is subject to O-(5'-phospho-RNA)-tyrosine. The 146-residue stretch at 991–1136 folds into the Peptidase C24 domain; sequence GNNCEDLPLH…KVFTPITDAP (146 aa). Active-site for 3CLpro activity residues include H1025, D1039, and C1103. One can recognise a RdRp catalytic domain in the interval 1379–1501; it reads DHCLELDYSK…TIPSHLTKSI (123 aa). A disordered region spans residues 1654–1686; that stretch reads SDLIREGNMSDNKSTPEQQHESSRAMDAGATGA.

In terms of processing, specific enzymatic cleavages by its own cysteine protease yield mature proteins. The protease cleaves itself from the nascent polyprotein autocatalytically. Precursor p41 can be cleaved by viral 3CLpro into protein p19 and VPg, or cleaved by host protease into protein p23/2 and protein p18. VPg is uridylylated by the polymerase and is covalently attached to the 5'-end of the polyadenylated genomic and subgenomic RNAs. This uridylylated form acts as a nucleotide-peptide primer for the polymerase.

Its subcellular location is the virion. It is found in the host cytoplasm. The catalysed reaction is a ribonucleoside 5'-triphosphate + H2O = a ribonucleoside 5'-diphosphate + phosphate + H(+). It catalyses the reaction Endopeptidase with a preference for cleavage when the P1 position is occupied by Glu-|-Xaa and the P1' position is occupied by Gly-|-Yaa.. It carries out the reaction RNA(n) + a ribonucleoside 5'-triphosphate = RNA(n+1) + diphosphate. Displays NTPase activity, but no helicase activity. Induces the formation of convoluted membranes derived from the host ER. These remodeled membranes probably form the viral factories that contain the replication complex. Together with NS2 and NS4, initiates the formation of the replication complex. Its function is as follows. Viral genome-linked protein is covalently linked to the 5'-end of the positive-strand, negative-strand genomic RNAs and subgenomic RNA. Acts as a genome-linked replication primer. May recruit ribosome to viral RNA thereby promoting viral proteins translation. Interacts with host translation initiation complex to allow the translation of viral proteins. Functionally, processes the polyprotein. 3CLpro-RdRp is first released by autocleavage, then all other proteins are cleaved. May cleave polyadenylate-binding protein thereby inhibiting cellular translation. In terms of biological role, replicates genomic and antigenomic RNA by recognizing replications specific signals. Also transcribes a subgenomic mRNA by initiating RNA synthesis internally on antigenomic RNA. This sgRNA codes for structural proteins. Catalyzes the covalent attachment VPg with viral RNAs. Capsid protein self assembles to form an icosahedral capsid with a T=3 symmetry, about 35 nm in diameter, and consisting of 180 capsid proteins. A smaller form of capsid with a diameter of 23 nm might be capsid proteins assembled as icosahedron with T=1 symmetry. The capsid encapsulate VP2 proteins and genomic or subgenomic RNA. Attaches virion to target cells by binding histo-blood group antigens, inducing endocytosis of the viral particle. Acidification of the endosome induces conformational change of capsid protein thereby injecting virus genomic RNA into host cytoplasm. The sequence is that of Genome polyprotein from Bos taurus (Bovine).